The primary structure comprises 1274 residues: DENN domain-containing protein 5B (1274 aa).

Ser2 carries the post-translational modification N-acetylserine. The region spanning 39-244 (DELAGENFDQ…EVPLPPPGRS (206 aa)) is the uDENN domain. Phosphoserine is present on residues Ser49 and Ser178. Positions 263-399 (ELPLSDYPLR…VDFIQELSEV (137 aa)) constitute a cDENN domain. The region spanning 401 to 581 (VQFGIPPEGS…DNKIMSQWEE (181 aa)) is the dDENN domain. The RUN 1 domain maps to 772–932 (LEENTLIASL…DYFCFTSVFT (161 aa)). The residue at position 822 (Ser822) is a Phosphoserine. Residues 916 to 936 (LLSLNAVDYFCFTSVFTTIMI) traverse the membrane as a helical segment. Positions 936 to 1044 (IPYRSVIIPI…DDGSLERILI (109 aa)) constitute a PLAT domain. Residue Thr1062 is modified to Phosphothreonine. Residues Ser1068, Ser1076, and Ser1079 each carry the phosphoserine modification. One can recognise an RUN 2 domain in the interval 1118–1267 (TVLLCGENGL…QDFTIVLEGS (150 aa)).

Belongs to the RAB6IP1 family.

It localises to the membrane. In terms of biological role, guanine nucleotide exchange factor (GEF) which may activate RAB39A and/or RAB39B. Promotes the exchange of GDP to GTP, converting inactive GDP-bound Rab proteins into their active GTP-bound form. The protein is DENN domain-containing protein 5B (DENND5B) of Homo sapiens (Human).